A 302-amino-acid polypeptide reads, in one-letter code: Light-independent protochlorophyllide reductase iron-sulfur ATP-binding protein (302 aa).

ATP is bound by residues 46–51 (GIGKST) and Lys75. Ser50 serves as a coordination point for Mg(2+). [4Fe-4S] cluster is bound by residues Cys131 and Cys165. 216-217 (NR) is a binding site for ATP.

The protein belongs to the NifH/BchL/ChlL family. In terms of assembly, homodimer. Protochlorophyllide reductase is composed of three subunits; BchL, BchN and BchB. Requires [4Fe-4S] cluster as cofactor.

It catalyses the reaction chlorophyllide a + oxidized 2[4Fe-4S]-[ferredoxin] + 2 ADP + 2 phosphate = protochlorophyllide a + reduced 2[4Fe-4S]-[ferredoxin] + 2 ATP + 2 H2O. The protein operates within porphyrin-containing compound metabolism; bacteriochlorophyll biosynthesis (light-independent). Functionally, component of the dark-operative protochlorophyllide reductase (DPOR) that uses Mg-ATP and reduced ferredoxin to reduce ring D of protochlorophyllide (Pchlide) to form chlorophyllide a (Chlide). This reaction is light-independent. The L component serves as a unique electron donor to the NB-component of the complex, and binds Mg-ATP. The chain is Light-independent protochlorophyllide reductase iron-sulfur ATP-binding protein from Methylocella silvestris (strain DSM 15510 / CIP 108128 / LMG 27833 / NCIMB 13906 / BL2).